A 444-amino-acid chain; its full sequence is tRNA-2-methylthio-N(6)-dimethylallyladenosine synthase (444 aa).

Residues 7–121 (KTFHVKSFGC…LPELIARAER (115 aa)) form the MTTase N-terminal domain. 6 residues coordinate [4Fe-4S] cluster: cysteine 16, cysteine 52, cysteine 84, cysteine 158, cysteine 162, and cysteine 165. The Radical SAM core domain occupies 144–376 (GNQRPTAFLT…QALLNEQQQA (233 aa)). A TRAM domain is found at 379–441 (EATVGRTTRL…PNSLGAEPLM (63 aa)).

It belongs to the methylthiotransferase family. MiaB subfamily. As to quaternary structure, monomer. It depends on [4Fe-4S] cluster as a cofactor.

It is found in the cytoplasm. The catalysed reaction is N(6)-dimethylallyladenosine(37) in tRNA + (sulfur carrier)-SH + AH2 + 2 S-adenosyl-L-methionine = 2-methylsulfanyl-N(6)-dimethylallyladenosine(37) in tRNA + (sulfur carrier)-H + 5'-deoxyadenosine + L-methionine + A + S-adenosyl-L-homocysteine + 2 H(+). Its function is as follows. Catalyzes the methylthiolation of N6-(dimethylallyl)adenosine (i(6)A), leading to the formation of 2-methylthio-N6-(dimethylallyl)adenosine (ms(2)i(6)A) at position 37 in tRNAs that read codons beginning with uridine. This chain is tRNA-2-methylthio-N(6)-dimethylallyladenosine synthase, found in Sphingopyxis alaskensis (strain DSM 13593 / LMG 18877 / RB2256) (Sphingomonas alaskensis).